The chain runs to 145 residues: MAFTFAAFCYLLALIAVGFCIFFAIYTVICVDELRTDYKNPIEQCRNLNQLILPEYIIHGTFTVLFIFSWQLISILANLPLAFYHIYTYAKRPVMSGPGIYDPTTILNRSTLSSTLRISWIKLAFYLVSFFYYLYAMIYTLVTSN.

The next 3 membrane-spanning stretches (helical) occupy residues 5-25 (FAAF…FFAI), 57-77 (IIHG…SILA), and 116-136 (LRIS…YLYA).

The protein belongs to the cornichon family. Interacts with glr-1. In terms of tissue distribution, widely expressed in the nervous system including in the AVA interneurons.

Its subcellular location is the endoplasmic reticulum membrane. The protein resides in the synapse. It is found in the cell projection. It localises to the dendrite. Negatively regulates export of glr-1 from the endoplasmic reticulum to synapses. This is Protein cornichon homolog 1 from Caenorhabditis elegans.